The primary structure comprises 508 residues: Light-independent protochlorophyllide reductase subunit B (508 aa).

Asp36 is a [4Fe-4S] cluster binding site. Residue Asp294 is the Proton donor of the active site. Residue 429–430 coordinates substrate; that stretch reads GM.

This sequence belongs to the ChlB/BchB/BchZ family. As to quaternary structure, protochlorophyllide reductase is composed of three subunits; ChlL, ChlN and ChlB. Forms a heterotetramer of two ChlB and two ChlN subunits. [4Fe-4S] cluster serves as cofactor.

The enzyme catalyses chlorophyllide a + oxidized 2[4Fe-4S]-[ferredoxin] + 2 ADP + 2 phosphate = protochlorophyllide a + reduced 2[4Fe-4S]-[ferredoxin] + 2 ATP + 2 H2O. It functions in the pathway porphyrin-containing compound metabolism; chlorophyll biosynthesis (light-independent). Functionally, component of the dark-operative protochlorophyllide reductase (DPOR) that uses Mg-ATP and reduced ferredoxin to reduce ring D of protochlorophyllide (Pchlide) to form chlorophyllide a (Chlide). This reaction is light-independent. The NB-protein (ChlN-ChlB) is the catalytic component of the complex. This chain is Light-independent protochlorophyllide reductase subunit B, found in Synechococcus elongatus (strain ATCC 33912 / PCC 7942 / FACHB-805) (Anacystis nidulans R2).